The primary structure comprises 459 residues: Ribulose bisphosphate carboxylase (459 aa).

N111 contributes to the substrate binding site. The active-site Proton acceptor is K166. K168 serves as a coordination point for substrate. Mg(2+) contacts are provided by K191, D193, and E194. K191 bears the N6-carboxylysine mark. H287 (proton acceptor) is an active-site residue. Residues R288, H321, and S368 each contribute to the substrate site.

Belongs to the RuBisCO large chain family. Type II subfamily. As to quaternary structure, homodimer. Requires Mg(2+) as cofactor.

The protein resides in the cytoplasm. The catalysed reaction is 2 (2R)-3-phosphoglycerate + 2 H(+) = D-ribulose 1,5-bisphosphate + CO2 + H2O. The enzyme catalyses D-ribulose 1,5-bisphosphate + O2 = 2-phosphoglycolate + (2R)-3-phosphoglycerate + 2 H(+). RuBisCO catalyzes two reactions: the carboxylation of D-ribulose 1,5-bisphosphate, the primary event in carbon dioxide fixation, as well as the oxidative fragmentation of the pentose substrate. Both reactions occur simultaneously and in competition at the same active site. In Halothiobacillus neapolitanus (strain ATCC 23641 / c2) (Thiobacillus neapolitanus), this protein is Ribulose bisphosphate carboxylase.